A 580-amino-acid polypeptide reads, in one-letter code: Laccase-5 (580 aa).

An N-terminal signal peptide occupies residues 1–25 (MDVTKSLLCFISFVAFLLFSSVAEA). Plastocyanin-like domains follow at residues 34 to 150 (IIQA…PPAG) and 160 to 312 (RNVP…YKSA). N-linked (GlcNAc...) asparagine glycosylation is present at N80. H84, H86, H129, and H131 together coordinate Cu cation. Residues N189, N300, N340, N392, N402, N410, and N443 are each glycosylated (N-linked (GlcNAc...) asparagine). Residues 428-564 (DFPAKPPVKF…AMAFLVENGN (137 aa)) enclose the Plastocyanin-like 3 domain. Residues H481, H484, H486, H543, C544, H545, and H549 each contribute to the Cu cation site.

It belongs to the multicopper oxidase family. Requires Cu cation as cofactor. Ubiquitous and constitutive.

The protein resides in the secreted. It is found in the extracellular space. Its subcellular location is the apoplast. The catalysed reaction is 4 hydroquinone + O2 = 4 benzosemiquinone + 2 H2O. Functionally, lignin degradation and detoxification of lignin-derived products. The chain is Laccase-5 (LAC5) from Arabidopsis thaliana (Mouse-ear cress).